Consider the following 334-residue polypeptide: Ethanol acetyltransferase 1 (334 aa).

The transit peptide at 1–16 (MFASNVVVLNKRSIRF) directs the protein to the mitochondrion. Residues Ser-124, Asp-148, and His-296 each act as charge relay system in the active site.

This sequence belongs to the AB hydrolase superfamily.

The protein resides in the mitochondrion. It carries out the reaction ethanol + acetyl-CoA = ethyl acetate + CoA. The catalysed reaction is acetyl-CoA + H2O = acetate + CoA + H(+). The enzyme catalyses ethyl acetate + H2O = ethanol + acetate + H(+). Alcohol acetyltransferase that catalyzes the synthesis of ethyl acetate from ethanol and acetyl-CoA. Can also function as a thioesterase by hydrolyzing acetyl-CoA in the absence of ethanol, as well as esterase hydrolyzing ethyl acetate. This Hanseniaspora uvarum (Yeast) protein is Ethanol acetyltransferase 1 (EAT1).